We begin with the raw amino-acid sequence, 214 residues long: Adenylate kinase (214 aa).

10-15 is an ATP binding site; it reads GAGKGT. The tract at residues 30–59 is NMP; the sequence is STGDMFRAAIKAGTELGKQAKALMDEGKLV. Residues threonine 31, arginine 36, 57 to 59, 85 to 88, and glutamine 92 each bind AMP; these read KLV and GFPR. Positions 122 to 159 are LID; the sequence is GRRVHQTSGRSYHIVYNPPKVEGKDDVTGEDLIIRADD. ATP-binding positions include arginine 123 and 132-133; that span reads SY. The AMP site is built by arginine 156 and arginine 167. Residue glutamine 200 coordinates ATP.

Belongs to the adenylate kinase family. In terms of assembly, monomer.

It localises to the cytoplasm. The enzyme catalyses AMP + ATP = 2 ADP. It participates in purine metabolism; AMP biosynthesis via salvage pathway; AMP from ADP: step 1/1. Catalyzes the reversible transfer of the terminal phosphate group between ATP and AMP. Plays an important role in cellular energy homeostasis and in adenine nucleotide metabolism. In Haemophilus influenzae (strain PittEE), this protein is Adenylate kinase.